A 629-amino-acid chain; its full sequence is Transferrin (629 aa).

An N-terminal signal peptide occupies residues Met1–Ala21. Transferrin-like domains follow at residues Tyr26–Gly366 and Met372–Cys621. Intrachain disulfides connect Cys29–Cys63 and Cys38–Cys54. Residue Tyr111 participates in Fe(3+) binding. 6 disulfides stabilise this stretch: Cys135-Cys231, Cys184-Cys210, Cys207-Cys216, Cys270-Cys283, Cys375-Cys409, and Cys385-Cys403. Positions 137, 141, 143, and 144 each coordinate hydrogencarbonate. Tyr225 contributes to the Fe(3+) binding site. Fe(3+) is bound by residues Asp408 and His561.

It belongs to the transferrin family. In terms of assembly, monomer.

Its function is as follows. Transferrins are iron binding transport proteins which bind Fe(3+) ion in association with the binding of an anion, usually bicarbonate. This transferrin binds only one Fe(3+) ion per protein molecule. Transports iron ions from the hemolymph into the eggs during the vitellogenic stage (oogenesis). This is Transferrin from Sarcophaga peregrina (Flesh fly).